Here is a 171-residue protein sequence, read N- to C-terminus: Endoribonuclease YbeY (171 aa).

Residues His-130, His-134, and His-140 each contribute to the Zn(2+) site.

Belongs to the endoribonuclease YbeY family. Zn(2+) serves as cofactor.

Its subcellular location is the cytoplasm. Single strand-specific metallo-endoribonuclease involved in late-stage 70S ribosome quality control and in maturation of the 3' terminus of the 16S rRNA. This chain is Endoribonuclease YbeY, found in Neisseria gonorrhoeae (strain ATCC 700825 / FA 1090).